Here is a 359-residue protein sequence, read N- to C-terminus: Cytoplasmic tRNA 2-thiolation protein 1 (359 aa).

This sequence belongs to the TtcA family. CTU1/NCS6/ATPBD3 subfamily. In terms of assembly, interacts with NCS2 and URM1. May act by forming a heterodimer with NCS2. Component of a large molecular weight complex of more than 250 kDa.

It localises to the cytoplasm. Its subcellular location is the mitochondrion. It participates in tRNA modification; 5-methoxycarbonylmethyl-2-thiouridine-tRNA biosynthesis. Its function is as follows. Plays a central role in 2-thiolation of mcm(5)S(2)U at tRNA wobble positions of tRNA(Lys), tRNA(Glu) and tRNA(Gln). Directly binds tRNAs and probably acts by catalyzing adenylation of tRNAs, an intermediate required for 2-thiolation. It is unclear whether it acts as a sulfurtransferase that transfers sulfur from thiocarboxylated URM1 onto the uridine of tRNAs at wobble position. Prior mcm(5) tRNA modification by the elongator complex is required for 2-thiolation. May also be involved in protein urmylation. The chain is Cytoplasmic tRNA 2-thiolation protein 1 from Saccharomyces cerevisiae (strain RM11-1a) (Baker's yeast).